A 369-amino-acid chain; its full sequence is 3,7-dimethylxanthine N-methyltransferase TCS1 (369 aa).

Tyr-24 is an S-adenosyl-L-homocysteine binding site. Residue Thr-31 coordinates caffeine. Positions 66, 71, 103, 104, 138, and 139 each coordinate S-adenosyl-L-homocysteine. Positions 156, 159, and 160 each coordinate caffeine. A Mg(2+)-binding site is contributed by Asn-177. Arg-225 serves as a coordination point for caffeine. The Mg(2+) site is built by Asp-263, Phe-265, and Asn-266. Phe-321 lines the caffeine pocket.

Belongs to the methyltransferase superfamily. Type-7 methyltransferase family. It depends on Mg(2+) as a cofactor.

It catalyses the reaction 1,7-dimethylxanthine + S-adenosyl-L-methionine = caffeine + S-adenosyl-L-homocysteine + H(+). The catalysed reaction is theobromine + S-adenosyl-L-methionine = caffeine + S-adenosyl-L-homocysteine + H(+). The enzyme catalyses 7-methylxanthine + S-adenosyl-L-methionine = theobromine + S-adenosyl-L-homocysteine + H(+). Its pathway is alkaloid biosynthesis. Its function is as follows. Involved in the biosynthesis of caffeine in cv. Puer. Involved in the biosynthesis of theacrine in cv. Kucha, a caffeine-like xanthine alkaloid with diverse beneficial biological activities including anti-depressive, sedative, and hypnotic activities, improving learning and memory, increasing exercise activity, and preventing nonalcoholic fatty liver disease. Catalyzes the conversion of 7-methylxanthine (7mX) to theobromine and of theobromine to caffeine. Has 3-N- and 1-N-methylation activity. This is 3,7-dimethylxanthine N-methyltransferase TCS1 from Camellia sinensis var. assamica (Assam tea).